The primary structure comprises 260 residues: ATP synthase subunit a (260 aa).

Positions 1–11 (MQNTLLRTYIN) are cleaved as a propeptide — removed in mature form. The next 6 helical transmembrane spans lie at 37–57 (ITTFTLYTIIVLLVVSSLYVL), 96–116 (YFPFIYTLFMFILISNLISMI), 126–146 (FVFIISLSMIIWLGITILSLF), 152–172 (FFSLFVPSGTALPLVPLLVVI), 192–212 (IFSGHLLMAILAGLTMTFVQI), and 217–237 (LILGFIPLAIILIIMCLEFGI).

Belongs to the ATPase A chain family. F-type ATPases have 2 components, CF(1) - the catalytic core - and CF(0) - the membrane proton channel. CF(1) has five subunits: alpha(3), beta(3), gamma(1), delta(1), epsilon(1). CF(0) has three main subunits: a, b and c.

The protein localises to the mitochondrion inner membrane. Its function is as follows. Mitochondrial membrane ATP synthase (F(1)F(0) ATP synthase or Complex V) produces ATP from ADP in the presence of a proton gradient across the membrane which is generated by electron transport complexes of the respiratory chain. F-type ATPases consist of two structural domains, F(1) - containing the extramembraneous catalytic core and F(0) - containing the membrane proton channel, linked together by a central stalk and a peripheral stalk. During catalysis, ATP synthesis in the catalytic domain of F(1) is coupled via a rotary mechanism of the central stalk subunits to proton translocation. Key component of the proton channel; it may play a direct role in the translocation of protons across the membrane. This is ATP synthase subunit a (ATP6) from Candida glabrata (strain ATCC 2001 / BCRC 20586 / JCM 3761 / NBRC 0622 / NRRL Y-65 / CBS 138) (Yeast).